Consider the following 505-residue polypeptide: 2,3-bisphosphoglycerate-independent phosphoglycerate mutase (505 aa).

The Mn(2+) site is built by Asp12 and Ser62. Ser62 serves as the catalytic Phosphoserine intermediate. Residues His123, 153–154 (RD), Arg185, Arg191, 257–260 (RPDR), and Lys330 each bind substrate. Mn(2+)-binding residues include Asp397, His401, Asp438, His439, and His456.

The protein belongs to the BPG-independent phosphoglycerate mutase family. In terms of assembly, monomer. It depends on Mn(2+) as a cofactor.

The catalysed reaction is (2R)-2-phosphoglycerate = (2R)-3-phosphoglycerate. It functions in the pathway carbohydrate degradation; glycolysis; pyruvate from D-glyceraldehyde 3-phosphate: step 3/5. In terms of biological role, catalyzes the interconversion of 2-phosphoglycerate and 3-phosphoglycerate. The polypeptide is 2,3-bisphosphoglycerate-independent phosphoglycerate mutase (Staphylococcus aureus (strain Mu50 / ATCC 700699)).